The primary structure comprises 589 residues: Peptide transporter PTR_A (589 aa).

The disordered stretch occupies residues 1 to 56; that stretch reads MSETKPAANDLSNVPSASDSDKDNSLDKVHSLEKTGVHEDINKLPSSDLEQLEDDG. Positions 19–42 are enriched in basic and acidic residues; sequence DSDKDNSLDKVHSLEKTGVHEDIN. The next 4 helical transmembrane spans lie at 74–95, 124–144, 153–173, and 180–200; these read IPLS…YYGL, ALSY…AWIA, AICI…ITSI, and NTSL…TGGV. Asparagine 233 carries N-linked (GlcNAc...) asparagine glycosylation. Transmembrane regions (helical) follow at residues 236–256, 266–286, 345–365, 388–408, 420–440, 467–487, 502–522, and 533–553; these read IQNV…SVIA, FWAG…VLLL, VYAC…GQMI, INAI…YPFI, IFWG…LQHF, IAIQ…ASIT, SFIM…GIAL, and WTYT…YIIF.

It belongs to the major facilitator superfamily. Proton-dependent oligopeptide transporter (POT/PTR) (TC 2.A.17) family.

Its subcellular location is the cell membrane. It catalyses the reaction a dipeptide(out) + H(+)(out) = a dipeptide(in) + H(+)(in). It carries out the reaction an L-amino acid tripeptide(out) + H(+)(out) = an L-amino acid tripeptide(in) + H(+)(in). Its function is as follows. Peptide transporter that exploits the inwardly directed proton motive force to facilitate the cellular uptake of di/tripeptides. The sequence is that of Peptide transporter PTR_A from Candidozyma auris (Yeast).